Reading from the N-terminus, the 712-residue chain is Diacylglycerol kinase 2 (712 aa).

2 Phorbol-ester/DAG-type zinc fingers span residues 72-133 and 145-208; these read HHQW…AKDC and RHHW…GDAC. Residues 338–479 form the DAGKc domain; it reads PDARPLLVFI…RWSVKIVEES (142 aa).

This sequence belongs to the eukaryotic diacylglycerol kinase family. As to quaternary structure, monomer. In terms of tissue distribution, expressed in rosette and cauline leaves, flowers, siliques and roots. Highly expressed in young leaves and at lower levels in older leaves. In young seedlings, expressed at the root-shoot junction zone and vascular bundles of the cotyledons. In older plants, expressed in root tip, central cylinder, root hair, leaf mesophyll cells and guard cells, sepals, filaments of the anthers, stigma, valves of young and early adult siliques and hilum of seeds.

It is found in the endoplasmic reticulum. The enzyme catalyses a 1,2-diacyl-sn-glycerol + ATP = a 1,2-diacyl-sn-glycero-3-phosphate + ADP + H(+). The catalysed reaction is 1-octadecanoyl-2-(5Z,8Z,11Z,14Z-eicosatetraenoyl)-sn-glycerol + ATP = 1-octadecanoyl-2-(5Z,8Z,11Z,14Z-eicosatetraenoyl)-sn-glycero-3-phosphate + ADP + H(+). It carries out the reaction 1,2-di-(9Z-octadecenoyl)-sn-glycerol + ATP = 1,2-di-(9Z-octadecenoyl)-sn-glycero-3-phosphate + ADP + H(+). Functionally, phosphorylates the second messenger diacylglycerol (DAG) to generate phosphatidic acid (PA), another important signaling molecule. PA is required for plant development and responses to abiotic stress and pathogen attack. May be involved in the accumulation of PA during cold stress. Involved in response to freezing stress by modulating the accumulation of PA. Exhibits high specificity for the unsaturated DAG analogs 1-stearoyl-2-arachidonoyl-sn-glycerol (1,2-SAG) and 1,2-dioleoyl-sn-glycerol (1,2-DOG). Exhibits high specificity for 1-palmitoyl, 2-oleoyl-sn-glycerol (1,2 POG), 1-stearoyl, 2-linoleoyl-sn-glycerol (1,2-SLG) and 1-oleoyl, 2-palmitoyl-sn-glycerol (1,2-OPG). Has almost no activity toward 1,2-dioctanoyl-sn-glycerol (1,2-DOCG), 1,2-dipalmitoyl-sn-glycerol (1,2-DPG), 1,2-dimyristoyl-sn-glycerol (1,2-DMG) and 1-oleoyl-2-acetyl-sn-glycerol (1,2-OAG). Functions together with DGK4 in male gametophyte development and biosynthesis of phosphatidylglycerol and phosphatidylinositol in the endoplasmic reticulum (ER). Involved in PA production for pollen grain growth, as well as leaf and root growth. This chain is Diacylglycerol kinase 2, found in Arabidopsis thaliana (Mouse-ear cress).